The sequence spans 193 residues: Orotate phosphoribosyltransferase (193 aa).

Residue 117–125 (EDVVTTGLS) coordinates 5-phospho-alpha-D-ribose 1-diphosphate. Residues Thr-121 and Arg-149 each coordinate orotate.

It belongs to the purine/pyrimidine phosphoribosyltransferase family. PyrE subfamily. In terms of assembly, homodimer. It depends on Mg(2+) as a cofactor.

It carries out the reaction orotidine 5'-phosphate + diphosphate = orotate + 5-phospho-alpha-D-ribose 1-diphosphate. It participates in pyrimidine metabolism; UMP biosynthesis via de novo pathway; UMP from orotate: step 1/2. Catalyzes the transfer of a ribosyl phosphate group from 5-phosphoribose 1-diphosphate to orotate, leading to the formation of orotidine monophosphate (OMP). The protein is Orotate phosphoribosyltransferase of Erythrobacter litoralis (strain HTCC2594).